We begin with the raw amino-acid sequence, 367 residues long: MSLADSVLAINNDLPIRTDSPVHSGKVRSVYWLTDADSRRLITTKGYNVPEDTPLAIMVISDRISAFDCIFHGEGGLKGIPGKGAALNAISNHWFKLFAENGLADSHILDIPHPFVWIVQKARPIKVEAICRQYITGSMWRAYSKGERVFCGITLPEGLEKDQKLPELLITPSTKGILTGIPGVPAQDDVNISRSDIEANYQAFGFEKLADIDLYEKLLKDGFKVISKALADIDQVFVDTKFEFGYVTDKDGNSKLIYMDEVGTPDSSRIWDGAAYRDGKILENSKEGFRQFLLNHFPDPDVLLNKDRMPEREALARDNDLPLEAMMQVSRTYTGVAEKVTGAPIPLPANPKADIIKILKDEYDLIV.

The protein belongs to the SAICAR synthetase family.

It catalyses the reaction 5-amino-1-(5-phospho-D-ribosyl)imidazole-4-carboxylate + L-aspartate + ATP = (2S)-2-[5-amino-1-(5-phospho-beta-D-ribosyl)imidazole-4-carboxamido]succinate + ADP + phosphate + 2 H(+). It participates in purine metabolism; IMP biosynthesis via de novo pathway; 5-amino-1-(5-phospho-D-ribosyl)imidazole-4-carboxamide from 5-amino-1-(5-phospho-D-ribosyl)imidazole-4-carboxylate: step 1/2. This is Phosphoribosylaminoimidazole-succinocarboxamide synthase from Shewanella baltica (strain OS223).